The sequence spans 209 residues: Ubiquitin-conjugating enzyme E2 S (209 aa).

The UBC core domain occupies 14-160 (QTIRQVMREL…ARMMTEIHAQ (147 aa)). Residue Cys-98 is the Glycyl thioester intermediate of the active site. Positions 165–194 (GVGAASDAKDDDGPSTKKHAGLDKKLQDKK) are disordered. A compositionally biased stretch (basic and acidic residues) spans 171-194 (DAKDDDGPSTKKHAGLDKKLQDKK).

This sequence belongs to the ubiquitin-conjugating enzyme family.

The enzyme catalyses S-ubiquitinyl-[E1 ubiquitin-activating enzyme]-L-cysteine + [E2 ubiquitin-conjugating enzyme]-L-cysteine = [E1 ubiquitin-activating enzyme]-L-cysteine + S-ubiquitinyl-[E2 ubiquitin-conjugating enzyme]-L-cysteine.. Its pathway is protein modification; protein ubiquitination. In terms of biological role, catalyzes the covalent attachment of ubiquitin to other proteins. Acts as an essential factor of the anaphase promoting complex/cyclosome (APC/C), a cell cycle-regulated ubiquitin ligase that controls progression through mitosis. Acts by specifically elongating polyubiquitin chains initiated by the E2 enzyme vih/UbcH10 on APC/C substrates, enhancing the degradation of APC/C substrates by the proteasome and promoting mitotic exit. The protein is Ubiquitin-conjugating enzyme E2 S of Drosophila persimilis (Fruit fly).